Here is a 67-residue protein sequence, read N- to C-terminus: Large ribosomal subunit protein bL32 (67 aa).

Over residues 1–19 (MAVPKRKMSRANTRARRAQ) the composition is skewed to basic residues. The interval 1–20 (MAVPKRKMSRANTRARRAQW) is disordered.

The protein belongs to the bacterial ribosomal protein bL32 family.

The chain is Large ribosomal subunit protein bL32 from Paenarthrobacter aurescens (strain TC1).